The sequence spans 345 residues: Phosphate import ATP-binding protein PstB 2 (345 aa).

The segment at 1 to 57 (MSDTPQSEPRRSDDRSGADDATAAAAGSTDAAAAAVSSKTGGIAGPPGGPGEVDGDE) is disordered. Residues 8–18 (EPRRSDDRSGA) are compositionally biased toward basic and acidic residues. Positions 19–35 (DDATAAAAGSTDAAAAA) are enriched in low complexity. Residues 42–52 (GIAGPPGGPGE) are compositionally biased toward gly residues. The 255-residue stretch at 86 to 340 (VSVSDLDTYY…PQSQRVEDYV (255 aa)) folds into the ABC transporter domain. Residue 118–125 (GPSGCGKS) coordinates ATP.

This sequence belongs to the ABC transporter superfamily. Phosphate importer (TC 3.A.1.7) family. As to quaternary structure, the complex is composed of two ATP-binding proteins (PstB), two transmembrane proteins (PstC and PstA) and a solute-binding protein (PstS).

The protein localises to the cell membrane. It catalyses the reaction phosphate(out) + ATP + H2O = ADP + 2 phosphate(in) + H(+). In terms of biological role, part of the ABC transporter complex PstSACB involved in phosphate import. Responsible for energy coupling to the transport system. This Halobacterium salinarum (strain ATCC 700922 / JCM 11081 / NRC-1) (Halobacterium halobium) protein is Phosphate import ATP-binding protein PstB 2.